A 78-amino-acid polypeptide reads, in one-letter code: UPF0349 protein BLi03401/BL03152 (78 aa).

The protein belongs to the UPF0349 family.

The protein is UPF0349 protein BLi03401/BL03152 of Bacillus licheniformis (strain ATCC 14580 / DSM 13 / JCM 2505 / CCUG 7422 / NBRC 12200 / NCIMB 9375 / NCTC 10341 / NRRL NRS-1264 / Gibson 46).